A 516-amino-acid polypeptide reads, in one-letter code: Probable serine/threonine-protein kinase ECU02_0550 (516 aa).

The Protein kinase domain occupies 4–230 (YKLRQVIGEG…ASEALMHRSF (227 aa)). ATP is bound by residues 10 to 18 (IGEGASSTV) and K32. D120 functions as the Proton acceptor in the catalytic mechanism.

Belongs to the protein kinase superfamily. CAMK Ser/Thr protein kinase family.

It catalyses the reaction L-seryl-[protein] + ATP = O-phospho-L-seryl-[protein] + ADP + H(+). The catalysed reaction is L-threonyl-[protein] + ATP = O-phospho-L-threonyl-[protein] + ADP + H(+). This Encephalitozoon cuniculi (strain GB-M1) (Microsporidian parasite) protein is Probable serine/threonine-protein kinase ECU02_0550.